The primary structure comprises 457 residues: Siroheme synthase (457 aa).

The segment at 1–204 (MDHLPIFCQL…ADEKAVNATT (204 aa)) is precorrin-2 dehydrogenase /sirohydrochlorin ferrochelatase. NAD(+) is bound by residues 22 to 23 (DV) and 43 to 44 (LT). Phosphoserine is present on Ser-128. Positions 216 to 457 (GEVVLVGAGP…RDKLNWFSNY (242 aa)) are uroporphyrinogen-III C-methyltransferase. Position 225 (Pro-225) interacts with S-adenosyl-L-methionine. The active-site Proton acceptor is Asp-248. Lys-270 serves as the catalytic Proton donor. Residues 301-303 (GGD), Ile-306, 331-332 (TA), Met-382, and Gly-411 each bind S-adenosyl-L-methionine.

The protein in the N-terminal section; belongs to the precorrin-2 dehydrogenase / sirohydrochlorin ferrochelatase family. In the C-terminal section; belongs to the precorrin methyltransferase family.

The catalysed reaction is uroporphyrinogen III + 2 S-adenosyl-L-methionine = precorrin-2 + 2 S-adenosyl-L-homocysteine + H(+). It carries out the reaction precorrin-2 + NAD(+) = sirohydrochlorin + NADH + 2 H(+). It catalyses the reaction siroheme + 2 H(+) = sirohydrochlorin + Fe(2+). It participates in cofactor biosynthesis; adenosylcobalamin biosynthesis; precorrin-2 from uroporphyrinogen III: step 1/1. The protein operates within cofactor biosynthesis; adenosylcobalamin biosynthesis; sirohydrochlorin from precorrin-2: step 1/1. Its pathway is porphyrin-containing compound metabolism; siroheme biosynthesis; precorrin-2 from uroporphyrinogen III: step 1/1. It functions in the pathway porphyrin-containing compound metabolism; siroheme biosynthesis; siroheme from sirohydrochlorin: step 1/1. It participates in porphyrin-containing compound metabolism; siroheme biosynthesis; sirohydrochlorin from precorrin-2: step 1/1. In terms of biological role, multifunctional enzyme that catalyzes the SAM-dependent methylations of uroporphyrinogen III at position C-2 and C-7 to form precorrin-2 via precorrin-1. Then it catalyzes the NAD-dependent ring dehydrogenation of precorrin-2 to yield sirohydrochlorin. Finally, it catalyzes the ferrochelation of sirohydrochlorin to yield siroheme. The polypeptide is Siroheme synthase (Salmonella choleraesuis (strain SC-B67)).